A 320-amino-acid chain; its full sequence is MKVNLDRNSSGFCIGVQGTIHVAEEKLRAEIGLYSLGDVVHNEVEVKRLESLGLVTIDDQAFRELRDAPVLIRAHGEPPSTYETARANNLEVTDTTCPVVAKLQRTARQLHLLGYQVIIYGKPVHPEVIGINGHAANSAVIIKHADLSDPAETAPLDLSRKTALISQTTMDVPGFYQLKENLETLFRNAGNPQEGPWTEVRDIDITLGLTGMQPTAPHVYKDTICRQVSSRNSKLHDFALSNDCIIFVAGKKSSNGQVLYNICRDANPRSYFIEDTGDLDEGWLKEANGSPVGSVGICGATSTPMWLLEKVARHIESLER.

Cys13 contacts [4Fe-4S] cluster. (2E)-4-hydroxy-3-methylbut-2-enyl diphosphate is bound by residues His41 and His75. The dimethylallyl diphosphate site is built by His41 and His75. Isopentenyl diphosphate-binding residues include His41 and His75. Cys97 contacts [4Fe-4S] cluster. (2E)-4-hydroxy-3-methylbut-2-enyl diphosphate is bound at residue His125. Dimethylallyl diphosphate is bound at residue His125. His125 provides a ligand contact to isopentenyl diphosphate. Residue Glu127 is the Proton donor of the active site. (2E)-4-hydroxy-3-methylbut-2-enyl diphosphate is bound at residue Thr168. Residue Cys225 participates in [4Fe-4S] cluster binding. (2E)-4-hydroxy-3-methylbut-2-enyl diphosphate-binding residues include Ser253, Ser254, Asn255, and Ser302. 4 residues coordinate dimethylallyl diphosphate: Ser253, Ser254, Asn255, and Ser302. 4 residues coordinate isopentenyl diphosphate: Ser253, Ser254, Asn255, and Ser302.

It belongs to the IspH family. The cofactor is [4Fe-4S] cluster.

The enzyme catalyses isopentenyl diphosphate + 2 oxidized [2Fe-2S]-[ferredoxin] + H2O = (2E)-4-hydroxy-3-methylbut-2-enyl diphosphate + 2 reduced [2Fe-2S]-[ferredoxin] + 2 H(+). It carries out the reaction dimethylallyl diphosphate + 2 oxidized [2Fe-2S]-[ferredoxin] + H2O = (2E)-4-hydroxy-3-methylbut-2-enyl diphosphate + 2 reduced [2Fe-2S]-[ferredoxin] + 2 H(+). It participates in isoprenoid biosynthesis; dimethylallyl diphosphate biosynthesis; dimethylallyl diphosphate from (2E)-4-hydroxy-3-methylbutenyl diphosphate: step 1/1. The protein operates within isoprenoid biosynthesis; isopentenyl diphosphate biosynthesis via DXP pathway; isopentenyl diphosphate from 1-deoxy-D-xylulose 5-phosphate: step 6/6. Functionally, catalyzes the conversion of 1-hydroxy-2-methyl-2-(E)-butenyl 4-diphosphate (HMBPP) into a mixture of isopentenyl diphosphate (IPP) and dimethylallyl diphosphate (DMAPP). Acts in the terminal step of the DOXP/MEP pathway for isoprenoid precursor biosynthesis. The chain is 4-hydroxy-3-methylbut-2-enyl diphosphate reductase from Chlorobium luteolum (strain DSM 273 / BCRC 81028 / 2530) (Pelodictyon luteolum).